We begin with the raw amino-acid sequence, 123 residues long: Large ribosomal subunit protein bL12 (123 aa).

This sequence belongs to the bacterial ribosomal protein bL12 family. In terms of assembly, homodimer. Part of the ribosomal stalk of the 50S ribosomal subunit. Forms a multimeric L10(L12)X complex, where L10 forms an elongated spine to which 2 to 4 L12 dimers bind in a sequential fashion. Binds GTP-bound translation factors.

Functionally, forms part of the ribosomal stalk which helps the ribosome interact with GTP-bound translation factors. Is thus essential for accurate translation. The polypeptide is Large ribosomal subunit protein bL12 (Borrelia duttonii (strain Ly)).